The chain runs to 662 residues: ATP-dependent zinc metalloprotease FtsH (662 aa).

Residues Met-1–Arg-15 are compositionally biased toward basic and acidic residues. A disordered region spans residues Met-1–Gly-35. The Cytoplasmic segment spans residues Met-1 to Gln-39. The chain crosses the membrane as a helical span at residues Gly-40–Leu-60. Topologically, residues Arg-61–Leu-154 are periplasmic. The chain crosses the membrane as a helical span at residues Asn-155 to Phe-175. Residues Arg-176 to Ala-662 lie on the Cytoplasmic side of the membrane. Position 250–257 (Gly-250–Thr-257) interacts with ATP. Residue His-472 participates in Zn(2+) binding. Residue Glu-473 is part of the active site. 2 residues coordinate Zn(2+): His-476 and Asp-548.

It in the central section; belongs to the AAA ATPase family. The protein in the C-terminal section; belongs to the peptidase M41 family. Homohexamer. It depends on Zn(2+) as a cofactor.

It localises to the cell inner membrane. Functionally, acts as a processive, ATP-dependent zinc metallopeptidase for both cytoplasmic and membrane proteins. Plays a role in the quality control of integral membrane proteins. The chain is ATP-dependent zinc metalloprotease FtsH from Pelodictyon phaeoclathratiforme (strain DSM 5477 / BU-1).